A 292-amino-acid polypeptide reads, in one-letter code: Protease HtpX (292 aa).

The next 2 membrane-spanning stretches (helical) occupy residues 5 to 25 (VVLFLLTNFAVLILAGIVMSV) and 34 to 54 (SGLLVMAAIFGFGGSFISLLL). His-140 contributes to the Zn(2+) binding site. The active site involves Glu-141. His-144 is a binding site for Zn(2+). The next 2 membrane-spanning stretches (helical) occupy residues 155-175 (LLQGVLNTFVIVLARVVGGII) and 193-213 (IIVFVLEMVFGLFATMIAMWF). Glu-218 provides a ligand contact to Zn(2+).

The protein belongs to the peptidase M48B family. Zn(2+) serves as cofactor.

It localises to the cell inner membrane. This Xanthomonas campestris pv. campestris (strain B100) protein is Protease HtpX.